The sequence spans 1076 residues: MESSMFKPSSMDLIRAGLQDLDRARALFGQLKADAIADGRCAELLGVLAHACDPDVALGNFVDIVNAMQSSRRDLDRVIPDAGALRRLITVLGASDAMGKFMRFRPELVEAASVGSADSHLFNRAQRRARLLMAVGADPDDQAMPVASKDLAEAATALRAGYRRQLAAIIAQDVMAEDPIRIQPTISSELSDLADAALEGALAIARHETEGNEHVRFTIIGMGKLGAQELNYVSDVDLIYVVEPADKDVDHQTLIRVGTKMGTMLQRVCQSVIMGVAEQPLWQIDGGLRPEGKDGALVRVLSSHKNYYEQWAENWEFQALLKARPVAGDPDLGQAYMDMSRPFVWSASKRKNFVYDCQKMRKRVEDLIPAPLKDREIKLGRGGLRDVEFTVQMLQLVHGRTDESLRTSNTLDSLQRLSEGGYVSRKQAVRMSQDYRFERVMEHRQQIWSLKRTHLFPDLGRASVGGLEKKRDIDVDELNQNQELRRLARAFGLHPEELVDKYDDTRREVRHLHLDIYYRPMLPVNAQMENDQIVLSVEAAQERFESIGFGDPDAAIRHVQALTAGVGRAAKINRIILPAVLQWLGEGQNPDMGLLNWRKLEENFGTESGYLGFLRDSTSAAQRLCHILSNSRFLGDALNKSVESISWLGDDGNLQARTREALDVQTGSALERFGSNINEFATSMRAMRRHEIERIGLSWMSGVISDSDSLKAMTDVYDAIIDASLTWAVRHQIAAFGVETAPAGITVIAMGRYGGREVNFSSDADAILIYRPADDADDGQANAFAKKVVEDLRNILQGPTTLEPKIELDLDLRPEGKNGPLVRSYASCEEYYESWASTWERQALLRARYAAGDAELARDFLINIADPLRYPTAELTEAELQNIRKLKARMEAERLPRGVRRERHLKLGKGGLSDVEWTVQLMQLQHAGDIKDLRVNGTLEALDVLEAKKLISAIDAIQLRKTWTLCTAARNGNYLWSGRANQADILPDDIYSLGGIAVYLGYGAHRGQHFENDLLAVMRKCRDVCQRLFYGQTEGEATAAATATASAATPQPQTAPRPRMHVIAPRLERNRRRAQR.

Positions 1–521 (MESSMFKPSS…LHLDIYYRPM (521 aa)) are adenylyl removase. The adenylyl transferase stretch occupies residues 524–1076 (VNAQMENDQI…LERNRRRAQR (553 aa)). Residues 1041–1056 (ATATASAATPQPQTAP) are compositionally biased toward low complexity. Residues 1041 to 1076 (ATATASAATPQPQTAPRPRMHVIAPRLERNRRRAQR) are disordered.

It belongs to the GlnE family. Requires Mg(2+) as cofactor.

The catalysed reaction is [glutamine synthetase]-O(4)-(5'-adenylyl)-L-tyrosine + phosphate = [glutamine synthetase]-L-tyrosine + ADP. The enzyme catalyses [glutamine synthetase]-L-tyrosine + ATP = [glutamine synthetase]-O(4)-(5'-adenylyl)-L-tyrosine + diphosphate. Its function is as follows. Involved in the regulation of glutamine synthetase GlnA, a key enzyme in the process to assimilate ammonia. When cellular nitrogen levels are high, the C-terminal adenylyl transferase (AT) inactivates GlnA by covalent transfer of an adenylyl group from ATP to specific tyrosine residue of GlnA, thus reducing its activity. Conversely, when nitrogen levels are low, the N-terminal adenylyl removase (AR) activates GlnA by removing the adenylyl group by phosphorolysis, increasing its activity. The regulatory region of GlnE binds the signal transduction protein PII (GlnB) which indicates the nitrogen status of the cell. This is Bifunctional glutamine synthetase adenylyltransferase/adenylyl-removing enzyme from Bifidobacterium longum subsp. infantis (strain ATCC 15697 / DSM 20088 / JCM 1222 / NCTC 11817 / S12).